A 243-amino-acid polypeptide reads, in one-letter code: Ribonuclease 3 (243 aa).

The RNase III domain maps to 10 to 146; the sequence is VNRFRKRFDT…FIGALYLDQG (137 aa). Glutamate 59 provides a ligand contact to Mg(2+). The active site involves aspartate 63. The Mg(2+) site is built by aspartate 132 and glutamate 135. The active site involves glutamate 135. The DRBM domain maps to 172-241; that stretch reads DFKTQFQEYV…AKSAYKQLKQ (70 aa). The span at 219 to 231 shows a compositional bias: basic and acidic residues; sequence GKGKTKKESEQRA. The tract at residues 219-243 is disordered; sequence GKGKTKKESEQRAAKSAYKQLKQIK.

This sequence belongs to the ribonuclease III family. In terms of assembly, homodimer. Mg(2+) serves as cofactor.

The protein resides in the cytoplasm. It catalyses the reaction Endonucleolytic cleavage to 5'-phosphomonoester.. Digests double-stranded RNA. Involved in the processing of primary rRNA transcript to yield the immediate precursors to the large and small rRNAs (23S and 16S). Processes some mRNAs, and tRNAs when they are encoded in the rRNA operon. Processes pre-crRNA and tracrRNA of type II CRISPR loci if present in the organism. The sequence is that of Ribonuclease 3 from Staphylococcus aureus (strain Mu3 / ATCC 700698).